We begin with the raw amino-acid sequence, 317 residues long: Tyrosine--tRNA ligase (317 aa).

Tyr33 provides a ligand contact to L-tyrosine. Residues 38–46 carry the 'HIGH' region motif; the sequence is PSGKIHMGH. Tyr155, Gln159, Asp162, and Gln177 together coordinate L-tyrosine. Residues 211 to 215 carry the 'KMSKS' region motif; the sequence is KMSSS. Ser214 provides a ligand contact to ATP.

It belongs to the class-I aminoacyl-tRNA synthetase family. TyrS type 3 subfamily. Homodimer.

Its subcellular location is the cytoplasm. It carries out the reaction tRNA(Tyr) + L-tyrosine + ATP = L-tyrosyl-tRNA(Tyr) + AMP + diphosphate + H(+). Catalyzes the attachment of tyrosine to tRNA(Tyr) in a two-step reaction: tyrosine is first activated by ATP to form Tyr-AMP and then transferred to the acceptor end of tRNA(Tyr). The sequence is that of Tyrosine--tRNA ligase from Methanococcoides burtonii (strain DSM 6242 / NBRC 107633 / OCM 468 / ACE-M).